The sequence spans 312 residues: Malate dehydrogenase (312 aa).

NAD(+) contacts are provided by residues 12–17 (GAGFTG) and Asp-36. The substrate site is built by Arg-87 and Arg-93. Residues Asn-100 and 123–125 (LTN) each bind NAD(+). Asn-125 provides a ligand contact to substrate. Position 149 is a phosphoserine (Ser-149). Residue Arg-156 participates in substrate binding. His-180 acts as the Proton acceptor in catalysis.

Belongs to the LDH/MDH superfamily. MDH type 3 family. As to quaternary structure, homotetramer.

The catalysed reaction is (S)-malate + NAD(+) = oxaloacetate + NADH + H(+). Catalyzes the reversible oxidation of malate to oxaloacetate. This is Malate dehydrogenase from Bacillus israeli.